Here is a 148-residue protein sequence, read N- to C-terminus: HTH-type transcriptional regulator SarZ (148 aa).

One can recognise an HTH marR-type domain in the interval 9–139; that stretch reads SKQLCFLFYV…IINNLRNFVS (131 aa). The H-T-H motif DNA-binding region spans 55-78; that stretch reads IKKLGERVFLDSGTLTPLLKKLEK.

This sequence belongs to the SarZ family.

The protein resides in the cytoplasm. Activates transcription of virulence factors alpha- and beta hemolysin genes (hla and hlb). Also, activates RNAIII expression, a central regulator transcribed from the agr locus. In Staphylococcus aureus (strain USA300), this protein is HTH-type transcriptional regulator SarZ (sarZ).